Consider the following 225-residue polypeptide: PKHD-type hydroxylase Smlt1146 (225 aa).

The 100-residue stretch at 78–177 (KYLPPRFNRY…RVASFFWVQS (100 aa)) folds into the Fe2OG dioxygenase domain. Residues His-96, Asp-98, and His-158 each contribute to the Fe cation site. Arg-168 serves as a coordination point for 2-oxoglutarate.

It depends on Fe(2+) as a cofactor. The cofactor is L-ascorbate.

This is PKHD-type hydroxylase Smlt1146 from Stenotrophomonas maltophilia (strain K279a).